The primary structure comprises 280 residues: uncharacterized protein (280 aa).

Positions 1-26 (MNILIKSAVKNFIVFSTALYTSFSFA) are cleaved as a signal peptide.

It to E.coli YibQ.

This is an uncharacterized protein from Haemophilus influenzae (strain ATCC 51907 / DSM 11121 / KW20 / Rd).